A 79-amino-acid chain; its full sequence is Small ribosomal subunit protein bS18 (79 aa).

The protein belongs to the bacterial ribosomal protein bS18 family. As to quaternary structure, part of the 30S ribosomal subunit. Forms a tight heterodimer with protein bS6.

Functionally, binds as a heterodimer with protein bS6 to the central domain of the 16S rRNA, where it helps stabilize the platform of the 30S subunit. This chain is Small ribosomal subunit protein bS18, found in Bradyrhizobium sp. (strain BTAi1 / ATCC BAA-1182).